A 901-amino-acid polypeptide reads, in one-letter code: HTH-type transcriptional regulator MalT (901 aa).

39–46 (SPAGYGKT) contributes to the ATP binding site. An HTH luxR-type domain is found at 829–894 (ELIRTSPLTQ…DAVQHAQQLL (66 aa)). The segment at residues 853–872 (NEQIAGELAVAATTIKTHIR) is a DNA-binding region (H-T-H motif).

Belongs to the MalT family. In terms of assembly, monomer in solution. Oligomerizes to an active state in the presence of the positive effectors ATP and maltotriose.

Its activity is regulated as follows. Activated by ATP and maltotriose, which are both required for DNA binding. Functionally, positively regulates the transcription of the maltose regulon whose gene products are responsible for uptake and catabolism of malto-oligosaccharides. Specifically binds to the promoter region of its target genes, recognizing a short DNA motif called the MalT box. The sequence is that of HTH-type transcriptional regulator MalT from Salmonella typhi.